Here is a 142-residue protein sequence, read N- to C-terminus: Hemoglobin cathodic subunit alpha (142 aa).

Serine 1 carries the N-acetylserine modification. Positions 1–142 (SLTAKDKALV…LSSTAADKYR (142 aa)) constitute a Globin domain. Histidine 59 provides a ligand contact to O2. Heme b is bound at residue histidine 88.

Belongs to the globin family. As to quaternary structure, heterotetramer of two alpha chains and two beta chains.

Involved in oxygen transport from gills to the various peripheral tissues. This Hoplosternum littorale (Hassar) protein is Hemoglobin cathodic subunit alpha.